Reading from the N-terminus, the 382-residue chain is Dual-specificity RNA methyltransferase RlmN (382 aa).

The Proton acceptor role is filled by E95. In terms of domain architecture, Radical SAM core spans 101–347; it reads EDDRGTLCIS…TTVRKTRGDD (247 aa). An intrachain disulfide couples C108 to C352. [4Fe-4S] cluster contacts are provided by C115, C119, and C122. Residues 178 to 179, S210, 232 to 234, and N309 each bind S-adenosyl-L-methionine; these read GE and SLH. C352 functions as the S-methylcysteine intermediate in the catalytic mechanism.

It belongs to the radical SAM superfamily. RlmN family. The cofactor is [4Fe-4S] cluster.

The protein localises to the cytoplasm. It catalyses the reaction adenosine(2503) in 23S rRNA + 2 reduced [2Fe-2S]-[ferredoxin] + 2 S-adenosyl-L-methionine = 2-methyladenosine(2503) in 23S rRNA + 5'-deoxyadenosine + L-methionine + 2 oxidized [2Fe-2S]-[ferredoxin] + S-adenosyl-L-homocysteine. The catalysed reaction is adenosine(37) in tRNA + 2 reduced [2Fe-2S]-[ferredoxin] + 2 S-adenosyl-L-methionine = 2-methyladenosine(37) in tRNA + 5'-deoxyadenosine + L-methionine + 2 oxidized [2Fe-2S]-[ferredoxin] + S-adenosyl-L-homocysteine. In terms of biological role, specifically methylates position 2 of adenine 2503 in 23S rRNA and position 2 of adenine 37 in tRNAs. m2A2503 modification seems to play a crucial role in the proofreading step occurring at the peptidyl transferase center and thus would serve to optimize ribosomal fidelity. This is Dual-specificity RNA methyltransferase RlmN from Bordetella avium (strain 197N).